A 98-amino-acid chain; its full sequence is Large ribosomal subunit protein uL23 (98 aa).

The protein belongs to the universal ribosomal protein uL23 family. In terms of assembly, part of the 50S ribosomal subunit. Contacts protein L29, and trigger factor when it is bound to the ribosome.

In terms of biological role, one of the early assembly proteins it binds 23S rRNA. One of the proteins that surrounds the polypeptide exit tunnel on the outside of the ribosome. Forms the main docking site for trigger factor binding to the ribosome. The polypeptide is Large ribosomal subunit protein uL23 (Methylobacterium sp. (strain 4-46)).